A 208-amino-acid chain; its full sequence is Putative chemokine-related protein FP248 (208 aa).

An N-terminal signal peptide occupies residues methionine 1–serine 23. N-linked (GlcNAc...) asparagine glycosylation is present at asparagine 29.

It localises to the secreted. This is Putative chemokine-related protein FP248 from Homo sapiens (Human).